Reading from the N-terminus, the 383-residue chain is Acetylornithine deacetylase (383 aa).

His-80 is a binding site for Zn(2+). The active site involves Asp-82. Asp-112 is a binding site for Zn(2+). Glu-144 is a catalytic residue. Zn(2+) contacts are provided by Glu-145, Glu-169, and His-355.

Belongs to the peptidase M20A family. ArgE subfamily. In terms of assembly, homodimer. Requires Zn(2+) as cofactor. Co(2+) is required as a cofactor. Glutathione serves as cofactor.

Its subcellular location is the cytoplasm. The catalysed reaction is N(2)-acetyl-L-ornithine + H2O = L-ornithine + acetate. It functions in the pathway amino-acid biosynthesis; L-arginine biosynthesis; L-ornithine from N(2)-acetyl-L-ornithine (linear): step 1/1. In terms of biological role, catalyzes the hydrolysis of the amide bond of N(2)-acetylated L-amino acids. Cleaves the acetyl group from N-acetyl-L-ornithine to form L-ornithine, an intermediate in L-arginine biosynthesis pathway, and a branchpoint in the synthesis of polyamines. The polypeptide is Acetylornithine deacetylase (Shigella flexneri).